A 215-amino-acid polypeptide reads, in one-letter code: Small ribosomal subunit protein uS3 (215 aa).

The KH type-2 domain occupies 38–107; it reads IRDYIKKTYH…KFQLNIEEVK (70 aa).

This sequence belongs to the universal ribosomal protein uS3 family. In terms of assembly, part of the 30S ribosomal subunit. Forms a tight complex with proteins S10 and S14.

Its function is as follows. Binds the lower part of the 30S subunit head. Binds mRNA in the 70S ribosome, positioning it for translation. The polypeptide is Small ribosomal subunit protein uS3 (Kosmotoga olearia (strain ATCC BAA-1733 / DSM 21960 / TBF 19.5.1)).